Consider the following 244-residue polypeptide: Small ribosomal subunit protein uS3 (244 aa).

Residues 39-107 (VREMLRKKLA…PAHINVTEVR (69 aa)) form the KH type-2 domain. The interval 213–244 (VGQEKQDDSPRNDRNDRGDRGDRPSRPAREAR) is disordered. The span at 216-244 (EKQDDSPRNDRNDRGDRGDRPSRPAREAR) shows a compositional bias: basic and acidic residues.

Belongs to the universal ribosomal protein uS3 family. In terms of assembly, part of the 30S ribosomal subunit. Forms a tight complex with proteins S10 and S14.

In terms of biological role, binds the lower part of the 30S subunit head. Binds mRNA in the 70S ribosome, positioning it for translation. The chain is Small ribosomal subunit protein uS3 from Xanthomonas euvesicatoria pv. vesicatoria (strain 85-10) (Xanthomonas campestris pv. vesicatoria).